Consider the following 124-residue polypeptide: Fluoride-specific ion channel FluC (124 aa).

4 consecutive transmembrane segments (helical) span residues 4–24, 35–55, 63–83, and 96–116; these read IFYIALGGGLGSVLRYLTTLV, YATFVTNIAGCLLIGLFFGYL, PYLKFFLITGLCGGYTTFSAF, and ILIAFLYISLSVFLGLMATWT. Positions 75 and 78 each coordinate Na(+).

It belongs to the fluoride channel Fluc/FEX (TC 1.A.43) family.

The protein resides in the cell inner membrane. It catalyses the reaction fluoride(in) = fluoride(out). With respect to regulation, na(+) is not transported, but it plays an essential structural role and its presence is essential for fluoride channel function. Its function is as follows. Fluoride-specific ion channel. Important for reducing fluoride concentration in the cell, thus reducing its toxicity. This chain is Fluoride-specific ion channel FluC, found in Flavobacterium psychrophilum (strain ATCC 49511 / DSM 21280 / CIP 103535 / JIP02/86).